A 276-amino-acid chain; its full sequence is Large ribosomal subunit protein uL2 (276 aa).

Disordered regions lie at residues 14-58 and 221-276; these read RNAS…GGGH and TRGE…KNRK. The span at 16–27 shows a compositional bias: polar residues; sequence ASVSDFSELTRS. Over residues 255-276 the composition is skewed to basic residues; sequence RRPKKASNKMIVRRRPSGKNRK.

Belongs to the universal ribosomal protein uL2 family. Part of the 50S ribosomal subunit. Forms a bridge to the 30S subunit in the 70S ribosome.

Functionally, one of the primary rRNA binding proteins. Required for association of the 30S and 50S subunits to form the 70S ribosome, for tRNA binding and peptide bond formation. It has been suggested to have peptidyltransferase activity; this is somewhat controversial. Makes several contacts with the 16S rRNA in the 70S ribosome. The protein is Large ribosomal subunit protein uL2 of Bifidobacterium longum subsp. infantis (strain ATCC 15697 / DSM 20088 / JCM 1222 / NCTC 11817 / S12).